The primary structure comprises 198 residues: Imidazoleglycerol-phosphate dehydratase (198 aa).

This sequence belongs to the imidazoleglycerol-phosphate dehydratase family.

It is found in the cytoplasm. The catalysed reaction is D-erythro-1-(imidazol-4-yl)glycerol 3-phosphate = 3-(imidazol-4-yl)-2-oxopropyl phosphate + H2O. It participates in amino-acid biosynthesis; L-histidine biosynthesis; L-histidine from 5-phospho-alpha-D-ribose 1-diphosphate: step 6/9. The protein is Imidazoleglycerol-phosphate dehydratase of Streptomyces griseus subsp. griseus (strain JCM 4626 / CBS 651.72 / NBRC 13350 / KCC S-0626 / ISP 5235).